We begin with the raw amino-acid sequence, 1414 residues long: MKALLDLFKQVQQNEQFDAIKIGLASPEKIRSWSYGEVKKPETINYRTFKPERDGLFCAKIFGPIKDYECLCGKYKRLKHRGVICEKCGVEVTLAKVRRERMGHIELASPTAHIWFLKSLPSRLGMVLDMTLRDIERVLYFEAYVVTDPGMTPLKKCQIMSEDDYAAKYEEFGDDFTAFMGAEGIRELLRAIDIDRDAEMLRQELKDSKSEAKIKKYAKRLKVLEAFQRSGIKPDWMIMEVLPVLPPELRPLVPLDGGRFATSDLNDLYRRVINRNNRLKRLMELRAPEIITRNEKRMLQEAVDSLLDNGRRGKAMTGANKRPLKSLAEMIKGKGGRFRQNLLGKRVDYSGRSVIVVGPQLKLHQCGLPKLMALELFKPFIFNKLELMGLATTIKAAKKLVEIQEPVVWDILEDVIREHPVMLNRAPTLHRLGIQAFEPVLIEGKAIQLHPLVCAAFNADFDGDQMAVHVPLSIEAQMEARTLMLASNNILFPSNGEPSIVPSQDIVLGLYYASREAINAKGEGMMFPDVSEVIRAYDNKMVELATRITVRITEYPKNVETGEFEKTVTRYETTVGRAILSEILPKGLPFSVLNRALKKKEISRLINLSFRKCGLRATVVFADQLLQSGFRLATRAGISICVDDMLVPKQKVDIIATAESEVKQIEQQYSSGLVTAGERYNKVVDIWGKAGDDVGKAMMDQLKVEDVTKRDGTKTTQESFNAIYMMADSGARGSAAQIRQLAGMRGLMAKPDGSIIETPITANFREGLNVLQYFISTHGARKGLADTALKTANSGYLTRRLVDVTQDLVVIEDDCGTSNGASMKALVEGGEVIEALRDRILGRVAANDIVNPETQATLYAAGTLLDEDMVEEIERLGIDEVKVRTPLTCDTRFGLCAQCYGRDLGRGTLVNAGEAVGVVAAQSIGEPGTQLTMRTFHIGGAASRAAVASSVEAKSNGTVRFTATMRYVTNGKGGQIVISRSGEVLITDDHGRERERHKVPYGATLIVKDGMVIKAGTALATWDPLTRPIITEYTGTVKFENVEEGSTVARQIDEVTGLSTLVVIDAKRRGSVTKTVRPQVKLLNEQGEEVKIAGTEHAVTIGFQVGALITVKDGQQVTVGEVLARIPTESQKTRDITGGLPRVAELFEARSPKDAGMLAEVTGTVAFGKETKGKQRLEITDMDGNKHEFLITKDKQVLVHDGQVVNKGEMIVDGPADPQDILRLLGIEALARYIVDEVQDVYRLQGVKINDKHIEVIVRQMLRRVQVVDAGDANYIVGEQVERSELLDENDRVIALGKIPATYENVLLGITKASLSTDSFISAASFQETTRVLTEAAIMGKKDGLRGLKENVIVGRLIPAGTGLAFHRARKEKDSWEAEERAALLQSEKAARAAEAEAQFADVSSTPDSDTDAS.

Residues C70, C72, C85, and C88 each coordinate Zn(2+). Mg(2+) contacts are provided by D460, D462, and D464. Zn(2+) contacts are provided by C815, C889, C896, and C899. A disordered region spans residues E1395–S1414.

The protein belongs to the RNA polymerase beta' chain family. As to quaternary structure, the RNAP catalytic core consists of 2 alpha, 1 beta, 1 beta' and 1 omega subunit. When a sigma factor is associated with the core the holoenzyme is formed, which can initiate transcription. Mg(2+) serves as cofactor. Zn(2+) is required as a cofactor.

The catalysed reaction is RNA(n) + a ribonucleoside 5'-triphosphate = RNA(n+1) + diphosphate. Functionally, DNA-dependent RNA polymerase catalyzes the transcription of DNA into RNA using the four ribonucleoside triphosphates as substrates. In Janthinobacterium sp. (strain Marseille) (Minibacterium massiliensis), this protein is DNA-directed RNA polymerase subunit beta'.